Reading from the N-terminus, the 321-residue chain is 6-phosphogluconolactonase-like protein 1 (321 aa).

The tract at residues 36-85 is disordered; sequence GKVSRSTQMSGTSLNGNGNTESKTMERVNSVRSNASSRGGSEDGATKKLK. The segment covering 39-57 has biased composition (polar residues); the sequence is SRSTQMSGTSLNGNGNTES. A compositionally biased stretch (low complexity) spans 63-74; the sequence is VNSVRSNASSRG. Phosphoserine occurs at positions 65 and 68. Basic and acidic residues predominate over residues 75–85; sequence GSEDGATKKLK. A Phosphothreonine modification is found at threonine 320.

It belongs to the glucosamine/galactosamine-6-phosphate isomerase family. 6-phosphogluconolactonase subfamily.

The protein localises to the cytoplasm. It localises to the nucleus. Functionally, may be involved in regulation of tRNA subcellular distribution. The sequence is that of 6-phosphogluconolactonase-like protein 1 (SOL1) from Saccharomyces cerevisiae (strain ATCC 204508 / S288c) (Baker's yeast).